The chain runs to 558 residues: MRCALALSALLLLLSTPPLLPSSPSPSPSPSQNATQTTTDSSNKTAPTPASSVTIMATDTAQQSTVPTSKANEILASVKATTLGVSSDSPGTTTLAQQVSGPVNTTVARGGGSGNPTTTIESPKSTKSADTTTVATSTATAKPNTTSSQNGAEDTTNSGGKSSHSVTTDLTSTKAEHLTTPHPTSPLSPRQPTSTHPVATPTSSGHDHLMKISSSSSTVAIPGYTFTSPGMTTTLLETVFHHVSQAGLELLTSGDLPTLASQSAGITASSVISQRTQQTSSQMPASSTAPSSQETVQPTSPATALRTPTLPETMSSSPTAASTTHRYPKTPSPTVAHESNWAKCEDLETQTQSEKQLVLNLTGNTLCAGGASDEKLISLICRAVKATFNPAQDKCGIRLASVPGSQTVVVKEITIHTKLPAKDVYERLKDKWDELKEAGVSDMKLGDQGPPEEAEDRFSMPLIITIVCMASFLLLVAALYGCCHQRLSQRKDQQRLTEELQTVENGYHDNPTLEVMETSSEMQEKKVVSLNGELGDSWIVPLDNLTKDDLDEEEDTHL.

The signal sequence occupies residues 1 to 22 (MRCALALSALLLLLSTPPLLPS). Residues 20–29 (LPSSPSPSPS) show a composition bias toward pro residues. Disordered stretches follow at residues 20–50 (LPSS…PTPA), 83–210 (LGVS…DHLM), and 270–338 (SVIS…VAHE). Over 23–461 (SPSPSPSPSQ…EEAEDRFSMP (439 aa)) the chain is Extracellular. 2 stretches are compositionally biased toward polar residues: residues 32–50 (QNAT…PTPA) and 83–107 (LGVS…NTTV). Residues Asn-33, Asn-43, and Asn-104 are each glycosylated (N-linked (GlcNAc...) asparagine). The span at 125 to 142 (STKSADTTTVATSTATAK) shows a compositional bias: low complexity. Composition is skewed to polar residues over residues 143–173 (PNTT…LTST), 190–204 (RQPT…PTSS), and 270–302 (SVIS…TSPA). A glycan (N-linked (GlcNAc...) asparagine) is linked at Asn-144. Residues 313–324 (TMSSSPTAASTT) are compositionally biased toward low complexity. A glycan (N-linked (GlcNAc...) asparagine) is linked at Asn-360. A helical membrane pass occupies residues 462-482 (LIITIVCMASFLLLVAALYGC). Residues 483 to 558 (CHQRLSQRKD…DLDEEEDTHL (76 aa)) lie on the Cytoplasmic side of the membrane. Thr-518 is subject to Phosphothreonine. Residues Ser-529 and Ser-537 each carry the phosphoserine modification. The residue at position 556 (Thr-556) is a Phosphothreonine.

It belongs to the podocalyxin family. In terms of assembly, monomer; when associated with the membrane raft. Oligomer; when integrated in the apical membrane. Interacts (via the C-terminal PDZ-binding motif DTHL) with NHERF1 (via the PDZ domains); the interaction is not detected in glomerular epithelium cells, take place early in the secretory pathway and is necessary for its apical membrane sorting. Found in a complex with EZR, PODXL and NHERF2. Associates with the actin cytoskeleton through complex formation with EZR and NHERF2. Interacts (via the C-terminal PDZ-binding motif DTHL) with NHERF2 (via the PDZ 1 domain); interaction is detected in glomerular epithelium cells. Interacts with EZR. In terms of processing, N- and O-linked glycosylated. Sialoglycoprotein. In terms of tissue distribution, glomerular epithelium cell (podocyte).

The protein resides in the apical cell membrane. It localises to the cell projection. It is found in the lamellipodium. Its subcellular location is the filopodium. The protein localises to the ruffle. The protein resides in the microvillus. It localises to the membrane raft. It is found in the membrane. Functionally, involved in the regulation of both adhesion and cell morphology and cancer progression. Functions as an anti-adhesive molecule that maintains an open filtration pathway between neighboring foot processes in the podocyte by charge repulsion. Acts as a pro-adhesive molecule, enhancing the adherence of cells to immobilized ligands, increasing the rate of migration and cell-cell contacts in an integrin-dependent manner. Induces the formation of apical actin-dependent microvilli. Involved in the formation of a preapical plasma membrane subdomain to set up initial epithelial polarization and the apical lumen formation during renal tubulogenesis. Plays a role in cancer development and aggressiveness by inducing cell migration and invasion through its interaction with the actin-binding protein EZR. Affects EZR-dependent signaling events, leading to increased activities of the MAPK and PI3K pathways in cancer cells. In Homo sapiens (Human), this protein is Podocalyxin (PODXL).